A 292-amino-acid chain; its full sequence is tRNA pseudouridine synthase B (292 aa).

The Nucleophile role is filled by Asp38.

This sequence belongs to the pseudouridine synthase TruB family. Type 1 subfamily.

It carries out the reaction uridine(55) in tRNA = pseudouridine(55) in tRNA. In terms of biological role, responsible for synthesis of pseudouridine from uracil-55 in the psi GC loop of transfer RNAs. The chain is tRNA pseudouridine synthase B from Streptococcus pneumoniae serotype 2 (strain D39 / NCTC 7466).